The following is a 104-amino-acid chain: DNA-directed RNA polymerase subunit omega (104 aa).

This sequence belongs to the RNA polymerase subunit omega family. As to quaternary structure, the RNAP catalytic core consists of 2 alpha, 1 beta, 1 beta' and 1 omega subunit. When a sigma factor is associated with the core the holoenzyme is formed, which can initiate transcription.

The enzyme catalyses RNA(n) + a ribonucleoside 5'-triphosphate = RNA(n+1) + diphosphate. Promotes RNA polymerase assembly. Latches the N- and C-terminal regions of the beta' subunit thereby facilitating its interaction with the beta and alpha subunits. This is DNA-directed RNA polymerase subunit omega from Streptococcus thermophilus (strain CNRZ 1066).